Consider the following 809-residue polypeptide: Zygotic DNA replication licensing factor mcm3 (809 aa).

The MCM domain occupies 297-504 (IFEQLSRSLA…QDREISDHVL (208 aa)). An ATP-binding site is contributed by 347–354 (GDPSVAKS). An Arginine finger motif is present at residues 479 to 482 (SRFD). Positions 664 to 741 (KKRRRRDEDS…TDSSAKPGLS (78 aa)) are disordered. The span at 696-705 (AQEGESHDPY) shows a compositional bias: basic and acidic residues.

It belongs to the MCM family. In terms of assembly, component of the mcm2-7 complex (RLF-M). The complex forms a toroidal hexameric ring with the proposed subunit order mcm2-mcm6-mcm4-mcm7-mcm3-mcm5. Component of the CMG helicase complex, composed of the mcm2-7 complex, the GINS complex and cdc45.

It localises to the nucleus. Its subcellular location is the chromosome. The catalysed reaction is ATP + H2O = ADP + phosphate + H(+). Functionally, acts as a component of the MCM2-7 complex (MCM complex) which is the putative replicative helicase essential for 'once per cell cycle' DNA replication initiation and elongation in eukaryotic cells. The active ATPase sites in the MCM2-7 ring are formed through the interaction surfaces of two neighboring subunits such that a critical structure of a conserved arginine finger motif is provided in trans relative to the ATP-binding site of the Walker A box of the adjacent subunit. The six ATPase active sites, however, are likely to contribute differentially to the complex helicase activity. The existence of maternal and zygotic forms of mcm3 and mcm6 suggests that specific forms of mcm2-7 complexes may be used during different stages of development. The chain is Zygotic DNA replication licensing factor mcm3 (zmcm3) from Xenopus tropicalis (Western clawed frog).